The following is a 385-amino-acid chain: tRNA-specific 2-thiouridylase MnmA (385 aa).

ATP is bound by residues 18–25 (AMSGGVDS) and Leu-44. The active-site Nucleophile is Cys-112. A disulfide bond links Cys-112 and Cys-209. Gly-136 contacts ATP. The segment at 159–161 (RDQ) is interaction with tRNA. The active-site Cysteine persulfide intermediate is the Cys-209.

It belongs to the MnmA/TRMU family.

Its subcellular location is the cytoplasm. It catalyses the reaction S-sulfanyl-L-cysteinyl-[protein] + uridine(34) in tRNA + AH2 + ATP = 2-thiouridine(34) in tRNA + L-cysteinyl-[protein] + A + AMP + diphosphate + H(+). Its function is as follows. Catalyzes the 2-thiolation of uridine at the wobble position (U34) of tRNA, leading to the formation of s(2)U34. The polypeptide is tRNA-specific 2-thiouridylase MnmA (Methylorubrum extorquens (strain PA1) (Methylobacterium extorquens)).